Reading from the N-terminus, the 619-residue chain is Cationic amino acid transporter 3 (619 aa).

At 1 to 36 (MPWQAFRRFGQKLVRRRTLESGMAETRLARCLSTLD) the chain is on the cytoplasmic side. The helical transmembrane segment at 37-57 (LVALGVGSTLGAGVYVLAGEV) threads the bilayer. Residues 58–61 (AKDK) are Extracellular-facing. A helical membrane pass occupies residues 62–82 (AGPSIVICFLVAALSSVLAGL). The Cytoplasmic portion of the chain corresponds to 83–107 (CYAEFGARVPRSGSAYLYSYVTVGE). A helical transmembrane segment spans residues 108–128 (LWAFTTGWNLILSYVIGTASV). Residues 129–162 (ARAWSSAFDNLIGNHISKTLQGSIALHVPHVLAE) lie on the Extracellular side of the membrane. A helical transmembrane segment spans residues 163-183 (YPDFFALGLVLLLTGLLALGA). Over 184–191 (SESALVTK) the chain is Cytoplasmic. Residues 192 to 212 (VFTGVNLLVLGFVMISGFVKG) traverse the membrane as a helical segment. Residues 213-233 (DVHNWKLTEEDYELAMAELND) are Extracellular-facing. N-linked (GlcNAc...) asparagine glycosylation occurs at asparagine 232. A helical transmembrane segment spans residues 234-254 (TYSLGPLGSGGFVPFGFEGIL). The Cytoplasmic portion of the chain corresponds to 255 to 285 (RGAATCFYAFVGFDCIATTGEEAQNPQRSIP). The helical transmembrane segment at 286-306 (MGIVISLSVCFLAYFAVSSAL) threads the bilayer. The Extracellular portion of the chain corresponds to 307–335 (TLMMPYYQLQPESPLPEAFLYIGWAPARY). Residues 336-356 (VVAVGSLCALSTSLLGSMFPM) traverse the membrane as a helical segment. The Cytoplasmic segment spans residues 357–382 (PRVIYAMAEDGLLFRVLARIHTGTRT). Residues 383 to 403 (PIIATVVSGIIAAFMAFLFKL) traverse the membrane as a helical segment. Topologically, residues 404–406 (TDL) are extracellular. The chain crosses the membrane as a helical span at residues 407-427 (VDLMSIGTLLAYSLVSICVLI). The Cytoplasmic portion of the chain corresponds to 428–475 (LRYQPDQETKTGEEVELQEEAITTESEKLTLWGLFFPLNSIPTPLSGQ). The chain crosses the membrane as a helical span at residues 476–496 (IVYVCSSLLAVLLTALCLVLA). At 497–506 (QWSVPLLSGD) the chain is on the extracellular side. The chain crosses the membrane as a helical span at residues 507-527 (LLWTAVVVLLLLLIIGIIVVI). Residues 528–540 (WRQPQSSTPLHFK) are Cytoplasmic-facing. Residues 541–561 (VPALPLLPLMSIFVNIYLMMQ) form a helical membrane-spanning segment. Residues 562–569 (MTAGTWAR) lie on the Extracellular side of the membrane. The chain crosses the membrane as a helical span at residues 570 to 590 (FGVWMLIGFAIYFGYGIQHSL). Topologically, residues 591 to 619 (EEIKSNQPSRKSRAKTVDLDPGTLYVHSV) are cytoplasmic. Position 606 is a phosphothreonine (threonine 606). Serine 618 carries the phosphoserine modification.

It belongs to the amino acid-polyamine-organocation (APC) superfamily. Cationic amino acid transporter (CAT) (TC 2.A.3.3) family. N-glycosylated. Highly expressed in thymus, uterus and testis. Detected at lower levels in brain, mammary gland, prostate, salivary gland and fetal spleen. In brain, highest expression in thalamus, hippocampus and amygdala.

It localises to the cell membrane. It catalyses the reaction L-arginine(in) = L-arginine(out). The enzyme catalyses L-lysine(in) = L-lysine(out). The catalysed reaction is L-ornithine(in) = L-ornithine(out). Functionally, uniporter that mediates the uptake of cationic L-amino acids such as L-arginine, L-lysine and L-ornithine. The transport is sodium ions- and pH-independent, moderately trans-stimulated and is mediated by passive diffusion. This chain is Cationic amino acid transporter 3, found in Homo sapiens (Human).